The chain runs to 388 residues: Beta-1,4-galactosyltransferase 5 (388 aa).

At 1–14 the chain is on the cytoplasmic side; the sequence is MRVRRGLLRLPRRS. A helical; Signal-anchor for type II membrane protein transmembrane segment spans residues 15–35; sequence LLAALFFFSLSSSLLYFVYVA. Residues 36 to 388 lie on the Lumenal side of the membrane; that stretch reads PGIVNTYLFM…TPELAQVTEY (353 aa). Asparagine 77, asparagine 81, asparagine 90, asparagine 111, and asparagine 128 each carry an N-linked (GlcNAc...) asparagine glycan. A disulfide bridge links cysteine 114 with cysteine 158. UDP-alpha-D-galactose contacts are provided by residues 169-173, 208-210, 235-236, tyrosine 264, and tryptophan 296; these read PFRNR, FNR, and VD. The cysteines at positions 229 and 248 are disulfide-linked. Aspartate 236 lines the Mn(2+) pocket. N-acetyl-D-glucosamine is bound at residue 298–301; it reads GEDD. 329–330 contributes to the UDP-alpha-D-galactose binding site; sequence YH. Arginine 340 serves as a coordination point for N-acetyl-D-glucosamine. N-linked (GlcNAc...) asparagine glycosylation is found at asparagine 364 and asparagine 373.

This sequence belongs to the glycosyltransferase 7 family. As to quaternary structure, (Microbial infection) Interacts with porcine reproductive and respiratory syndrome virus GP5. Mn(2+) serves as cofactor.

The protein resides in the golgi apparatus. It is found in the golgi stack membrane. It catalyses the reaction a beta-D-glucosyl-(1&lt;-&gt;1')-N-acylsphing-4-enine + UDP-alpha-D-galactose = a beta-D-Gal-(1-&gt;4)-beta-D-Glc-(1&lt;-&gt;1)-Cer(d18:1(4E)) + UDP + H(+). The protein operates within protein modification; protein glycosylation. It functions in the pathway sphingolipid metabolism. Its function is as follows. Catalyzes the synthesis of lactosylceramide (LacCer) via the transfer of galactose from UDP-galactose to glucosylceramide (GlcCer). LacCer is the starting point in the biosynthesis of all gangliosides (membrane-bound glycosphingolipids) which play pivotal roles in the CNS including neuronal maturation and axonal and myelin formation. Plays a role in the glycosylation of BMPR1A and regulation of its protein stability. Essential for extraembryonic development during early embryogenesis. Functionally, (Microbial infection) May play a role in the glycosylation of porcine reproductive and respiratory syndrome virus GP5 protein and may be involved in the regulation of viral proliferation. The sequence is that of Beta-1,4-galactosyltransferase 5 (B4GALT5) from Sus scrofa (Pig).